The sequence spans 461 residues: Nicotianamine aminotransferase A (461 aa).

Residues 1-29 (MVHQSNGHGEAAAAAANGKSNGHAAAANG) form a disordered region. The segment covering 11–29 (AAAAAANGKSNGHAAAANG) has biased composition (low complexity). Lys-289 bears the N6-(pyridoxal phosphate)lysine mark.

Belongs to the class-I pyridoxal-phosphate-dependent aminotransferase family. It depends on pyridoxal 5'-phosphate as a cofactor. As to expression, expressed in roots, but not in leaves.

The catalysed reaction is nicotianamine + 2-oxoglutarate = 3''-deamino-3''-oxonicotianamine + L-glutamate. Functionally, involved in biosynthesis of mugineic acid family phytosiderophores. The sequence is that of Nicotianamine aminotransferase A from Hordeum vulgare (Barley).